A 187-amino-acid chain; its full sequence is Oleosin Zm-II (187 aa).

A2 is subject to N-acetylalanine. The interval 2 to 51 (ADRDRSGIYGGAHATYGQQQQQGGGGRPMGEQVKKGMLHDKGPTASQALT) is polar. The segment at 17-42 (YGQQQQQGGGGRPMGEQVKKGMLHDK) is disordered. The span at 33–42 (QVKKGMLHDK) shows a compositional bias: basic and acidic residues. 3 helical membrane-spanning segments follow: residues 50-70 (LTVATLFPLGGLLLVLSGLAL), 83-103 (VFLIFSPVLVPAALLIGTAVM), and 104-124 (GFLTSGALGLGGLSSLTCLAN). The tract at residues 52–123 (VATLFPLGGL…GGLSSLTCLA (72 aa)) is hydrophobic. The segment covering 155–169 (TAQAGQAIQGRAQEA) has biased composition (low complexity). The tract at residues 155 to 187 (TAQAGQAIQGRAQEAGTGGGAGAGAGGGGRASS) is disordered. The span at 170 to 187 (GTGGGAGAGAGGGGRASS) shows a compositional bias: gly residues.

Belongs to the oleosin family. In terms of processing, the N-terminus is blocked. As to expression, found in embryonic axis, scutellum, and aleurone layer.

It localises to the lipid droplet. It is found in the membrane. Functionally, may have a structural role to stabilize the lipid body during desiccation of the seed by preventing coalescence of the oil. Probably interacts with both lipid and phospholipid moieties of lipid bodies. May also provide recognition signals for specific lipase anchorage in lipolysis during seedling growth. The sequence is that of Oleosin Zm-II (OLE18) from Zea mays (Maize).